The sequence spans 791 residues: Putative DNA (cytosine-5)-methyltransferase CMT1 (791 aa).

A disordered region spans residues 37-59 (YQSKKTKLQAPTKKPANKGGKKE). In terms of domain architecture, BAH spans 79–199 (VLINLNDDVY…VPYLNFTSAD (121 aa)). Residues 225–768 (KFLLDLYSGC…YAFGMASQGL (544 aa)) enclose the SAM-dependent MTase C5-type domain. Positions 308 to 333 (VESISELEDEEVEENDDIDEASTGAE) form a coiled coil. Residues 339–404 (FEVEKFLGIM…DGFKSHLLPL (66 aa)) form the Chromo domain. Cys417 is an active-site residue.

This sequence belongs to the class I-like SAM-binding methyltransferase superfamily. C5-methyltransferase family. Expressed in flowers. Not detected in leaves, roots, seedlings and plants prior formation of flower buds.

The protein localises to the nucleus. The catalysed reaction is a 2'-deoxycytidine in DNA + S-adenosyl-L-methionine = a 5-methyl-2'-deoxycytidine in DNA + S-adenosyl-L-homocysteine + H(+). In terms of biological role, may be involved in the CpXpG methylation and in gene silencing. The protein is Putative DNA (cytosine-5)-methyltransferase CMT1 (CMT1) of Arabidopsis thaliana (Mouse-ear cress).